We begin with the raw amino-acid sequence, 180 residues long: Type IV major pilin protein PilE1 (180 aa).

Positions Met-1–Gly-7 are excised as a propeptide. Residue Phe-8 is modified to N-methylphenylalanine. The helical transmembrane segment at Phe-8–Leu-28 threads the bilayer. O-linked (GlcNAc...) serine glycosylation occurs at Ser-70. Cys-128 and Cys-160 are disulfide-bonded.

This sequence belongs to the N-Me-Phe pilin family. The pili are polar flexible filaments of about 5.4 nanometers diameter and 2.5 micrometers average length; they consist of only a single polypeptide chain arranged in a helical configuration of five subunits per turn in the assembled pilus.

The protein localises to the fimbrium. The protein resides in the membrane. Functionally, major component of the type IV pilus (T4P) that plays a role in cellular adherence, microcolony formation, resistance to neutrophil mediated killing, twitching motility as well as transformation. Mediates the attachment and the formation of bacterial microcolonies on host epithelial cells. Mechanistically, pili retractation induces host NF-kappa-B activation in infected cells, which is temporally associated with the formation of gonococcal microcolonies. This chain is Type IV major pilin protein PilE1 (pilE1), found in Neisseria gonorrhoeae.